Here is a 113-residue protein sequence, read N- to C-terminus: Large ribosomal subunit protein bL17 (113 aa).

The protein belongs to the bacterial ribosomal protein bL17 family. In terms of assembly, part of the 50S ribosomal subunit. Contacts protein L32.

This chain is Large ribosomal subunit protein bL17, found in Clostridium tetani (strain Massachusetts / E88).